Here is a 718-residue protein sequence, read N- to C-terminus: DNA topoisomerase 1 (718 aa).

Residues 9-151 form the Toprim domain; that stretch reads HEVIICEKPK…KFSTLTREEI (143 aa). Mg(2+)-binding residues include Glu15 and Asp113. The region spanning 162-571 is the Topo IA-type catalytic domain; the sequence is DYGQVDSGAA…EAITEVRSIL (410 aa). The segment at 202 to 207 is interaction with DNA; the sequence is SAGRVQ. Tyr320 serves as the catalytic O-(5'-phospho-DNA)-tyrosine intermediate. The span at 361-371 shows a compositional bias: basic and acidic residues; that stretch reads HEGKKEDDAHP. The interval 361–380 is disordered; that stretch reads HEGKKEDDAHPAIHPTGLLP. C4-type zinc fingers lie at residues 598-626 and 680-706; these read CPAC…YPDC and CPEC…FPKC.

It belongs to the type IA topoisomerase family. As to quaternary structure, monomer. The cofactor is Mg(2+).

The enzyme catalyses ATP-independent breakage of single-stranded DNA, followed by passage and rejoining.. Releases the supercoiling and torsional tension of DNA, which is introduced during the DNA replication and transcription, by transiently cleaving and rejoining one strand of the DNA duplex. Introduces a single-strand break via transesterification at a target site in duplex DNA. The scissile phosphodiester is attacked by the catalytic tyrosine of the enzyme, resulting in the formation of a DNA-(5'-phosphotyrosyl)-enzyme intermediate and the expulsion of a 3'-OH DNA strand. The free DNA strand then undergoes passage around the unbroken strand, thus removing DNA supercoils. Finally, in the religation step, the DNA 3'-OH attacks the covalent intermediate to expel the active-site tyrosine and restore the DNA phosphodiester backbone. The polypeptide is DNA topoisomerase 1 (Methanothermobacter thermautotrophicus (strain ATCC 29096 / DSM 1053 / JCM 10044 / NBRC 100330 / Delta H) (Methanobacterium thermoautotrophicum)).